Consider the following 864-residue polypeptide: Probable M1 family aminopeptidase 1 (864 aa).

Substrate contacts are provided by residues Glu-149 and 289–293 (GAMEN). Zn(2+) is bound at residue His-325. Glu-326 (proton acceptor) is an active-site residue. Residues His-329 and Glu-348 each contribute to the Zn(2+) site.

The protein belongs to the peptidase M1 family. Zn(2+) is required as a cofactor.

In Encephalitozoon cuniculi (strain GB-M1) (Microsporidian parasite), this protein is Probable M1 family aminopeptidase 1.